Consider the following 204-residue polypeptide: Golgi to ER traffic protein 1 (204 aa).

Over 1–11 (MLTLDIDPYTI) the chain is Lumenal. The helical transmembrane segment at 12–31 (LVTSFLILAIQKLVTVIGKQ) threads the bilayer. The Cytoplasmic segment spans residues 32–116 (KIQLYIWQIY…RIDSITKLAI (85 aa)). Positions 78-113 (AKWTKINRALDKLKLEVQELNETIAGEKTRIDSITK) form a coiled coil. The helical transmembrane segment at 117–137 (TLILTLPIWFLRIFCRKTALL) threads the bilayer. Over 138 to 161 (YIRKGILPAYLEWWLALPFFKSGT) the chain is Lumenal. Residues 162–178 (IGLTCWMFVVNSVLSNL) form a helical membrane-spanning segment. The Cytoplasmic segment spans residues 179 to 204 (IFLISFPFTQKVERPIKPKNEQKTES).

The protein belongs to the WRB/GET1 family. As to quaternary structure, component of the Golgi to ER traffic (GET) complex, which is composed of GET1, GET2 and GET3. Within the complex, GET1 and GET2 form a heterotetramer which is stabilized by phosphatidylinositol binding and which binds to the GET3 homodimer.

The protein resides in the endoplasmic reticulum membrane. It localises to the golgi apparatus membrane. Functionally, required for the post-translational delivery of tail-anchored (TA) proteins to the endoplasmic reticulum. Together with GET2, acts as a membrane receptor for soluble GET3, which recognizes and selectively binds the transmembrane domain of TA proteins in the cytosol. The GET complex cooperates with the HDEL receptor ERD2 to mediate the ATP-dependent retrieval of resident ER proteins that contain a C-terminal H-D-E-L retention signal from the Golgi to the ER. This is Golgi to ER traffic protein 1 from Lodderomyces elongisporus (strain ATCC 11503 / CBS 2605 / JCM 1781 / NBRC 1676 / NRRL YB-4239) (Yeast).